The chain runs to 451 residues: MSNVIENLGKLDRKVTLAIPKAEVEKEKQERLVRLSKTVKMSGFRPGKVPMKMVEKQYGQQVEFEVRFDKAARKFFDITKEQDVKVAGQPKFEIKNEGVGEDEVAFDATFEVYPEVTIGDLSAAEVTRTGTEITDAEVDKTIDILRKQRVHYHARGEAGEHGDGGADVAAQNGDRVTLDFVGKIDGEEFAGGKAEDFPFVLGEGRMLPEFEQAALGLKVGESKTFPLAFPEDYHGKEVAGKTAEFTVTLKKIEWAHLPEVNDAFAKSLGIADGSVEKMRADIRENLEREVKRRTHSMLKDQVMEALLKASELEVPKALIEQDQERLVEMARRDLEQRGMPNAKDMPIPAEMFAQQAERRVKLGLILAEIVKANGLEAKADQIKAEIEDFAKSYEDPKEVMRWYYGDQQRLAEMEAYVLENNVVNFVCGKAKVTDKKVSFEELTAEGNQQQA.

Residues 173 to 258 (GDRVTLDFVG…LKKIEWAHLP (86 aa)) enclose the PPIase FKBP-type domain.

This sequence belongs to the FKBP-type PPIase family. Tig subfamily.

It localises to the cytoplasm. The catalysed reaction is [protein]-peptidylproline (omega=180) = [protein]-peptidylproline (omega=0). Involved in protein export. Acts as a chaperone by maintaining the newly synthesized protein in an open conformation. Functions as a peptidyl-prolyl cis-trans isomerase. In Cupriavidus necator (strain ATCC 17699 / DSM 428 / KCTC 22496 / NCIMB 10442 / H16 / Stanier 337) (Ralstonia eutropha), this protein is Trigger factor.